We begin with the raw amino-acid sequence, 356 residues long: Trans-enoyl reductase pgmF (356 aa).

NADP(+)-binding positions include 57 to 60 (VDFK), 175 to 178 (SGGC), 198 to 201 (STPN), Y216, 261 to 262 (VG), and 342 to 343 (AK).

This sequence belongs to the zinc-containing alcohol dehydrogenase family.

FAD-linked oxidoreductase; part of the gene cluster that mediates the biosynthesis of pleosporalin A, ascomycone A, as well as a third cryptic naphthoquinone derived pigment, all responsible for the coloration of conidia. The pathway begins with the biosynthesis of the cyclized heptaketide 3-acetonyl-1,6,8-trihydroxy-2-naphthaldehyde by the NR-PKS pgmA. The C-6 hydroxyl group is further methylated by the O-methyltransferase pgmB to yield fusarubinaldehyde which is in turn oxidized by the cytochrome P450 monooxygenase pgmC at C-9. The C-1 hydroxyl group is then methylated spontaneously. Although pgmE, pgmD and pgmH are essential for the production of pleosporalin A, it is not the case for the 2 other final products and it remains difficult to assign a specific function to each enzyme. PgmF and pgmG seem not to be involved in pigment biosynthesis although they were regulated by the cluster-specific transcription factor pgmR. The chain is Trans-enoyl reductase pgmF from Aspergillus terreus.